The primary structure comprises 432 residues: Ribosomal protein uS12 methylthiotransferase RimO (432 aa).

Residues 4 to 122 form the MTTase N-terminal domain; the sequence is NKVDIITLGC…LISDLGKSYH (119 aa). Cysteine 13, cysteine 51, cysteine 85, cysteine 146, cysteine 150, and cysteine 153 together coordinate [4Fe-4S] cluster. Residues 132–363 enclose the Radical SAM core domain; the sequence is TTPRHYAYVK…MRVQEGISAD (232 aa). One can recognise a TRAM domain in the interval 366–432; it reads ASKVGQTFRV…AFDLYGKVLN (67 aa).

This sequence belongs to the methylthiotransferase family. RimO subfamily. The cofactor is [4Fe-4S] cluster.

Its subcellular location is the cytoplasm. It catalyses the reaction L-aspartate(89)-[ribosomal protein uS12]-hydrogen + (sulfur carrier)-SH + AH2 + 2 S-adenosyl-L-methionine = 3-methylsulfanyl-L-aspartate(89)-[ribosomal protein uS12]-hydrogen + (sulfur carrier)-H + 5'-deoxyadenosine + L-methionine + A + S-adenosyl-L-homocysteine + 2 H(+). In terms of biological role, catalyzes the methylthiolation of an aspartic acid residue of ribosomal protein uS12. This is Ribosomal protein uS12 methylthiotransferase RimO from Parabacteroides distasonis (strain ATCC 8503 / DSM 20701 / CIP 104284 / JCM 5825 / NCTC 11152).